The following is a 62-amino-acid chain: Histone H1.2, embryonic (62 aa).

Positions H1 to K53 constitute an H15 domain.

It belongs to the histone H1/H5 family.

The protein localises to the nucleus. The protein resides in the chromosome. Histones H1 are necessary for the condensation of nucleosome chains into higher-order structures. The sequence is that of Histone H1.2, embryonic from Parechinus angulosus (Angulate sea urchin).